We begin with the raw amino-acid sequence, 311 residues long: tRNA dimethylallyltransferase (311 aa).

Gly-9–Thr-16 lines the ATP pocket. Substrate is bound at residue Thr-11 to Thr-16. Residues Asp-34–Gln-37 are interaction with substrate tRNA.

Belongs to the IPP transferase family. As to quaternary structure, monomer. Requires Mg(2+) as cofactor.

It carries out the reaction adenosine(37) in tRNA + dimethylallyl diphosphate = N(6)-dimethylallyladenosine(37) in tRNA + diphosphate. Functionally, catalyzes the transfer of a dimethylallyl group onto the adenine at position 37 in tRNAs that read codons beginning with uridine, leading to the formation of N6-(dimethylallyl)adenosine (i(6)A). The protein is tRNA dimethylallyltransferase of Clostridium botulinum (strain Loch Maree / Type A3).